We begin with the raw amino-acid sequence, 267 residues long: MSRLATRFEKLQSQQRKALVSYVMAGDPQPQVTVPLLHKMVAAGVDVIELGLPFSDPMADGPVIALAAERALAAGTNTLDALNMVKEFREQDQETPVVLMGYLNPVEVIGYEKFVSYAKQCGVDGLLLVDLPPEESKEFGAILKQHDMDQIFLLAPTSTDQRIQHVANQASGFIYYVSLKGVTGAATLDTSEAAARIEKIKGMTNVPVGVGFGISDAASAKAMGSVADAVIVGSAFVKSFATLAADEAVEQTVNKVKELRAALDELV.

Active-site proton acceptor residues include E49 and D60.

The protein belongs to the TrpA family. In terms of assembly, tetramer of two alpha and two beta chains.

It catalyses the reaction (1S,2R)-1-C-(indol-3-yl)glycerol 3-phosphate + L-serine = D-glyceraldehyde 3-phosphate + L-tryptophan + H2O. The protein operates within amino-acid biosynthesis; L-tryptophan biosynthesis; L-tryptophan from chorismate: step 5/5. Functionally, the alpha subunit is responsible for the aldol cleavage of indoleglycerol phosphate to indole and glyceraldehyde 3-phosphate. The chain is Tryptophan synthase alpha chain from Acinetobacter baumannii (strain AB307-0294).